Consider the following 4377-residue polypeptide: E3 ubiquitin-protein ligase HUWE1 (4377 aa).

A phosphoserine mark is found at Ser648 and Ser649. Disordered regions lie at residues 706–758 (KADG…VVGT), 978–1001 (DEKAGTTQGGKRSDGEQDGTAGSM), and 1018–1038 (TLAPMETDEPSSSDSKGKSKI). Positions 725 to 735 (ASSEDEEEEEV) are enriched in acidic residues. Over residues 737–756 (AMQSFNSAQQNETEPNQQVV) the composition is skewed to polar residues. The residue at position 740 (Ser740) is a Phosphoserine. Position 1084 is a phosphoserine (Ser1084). A compositionally biased stretch (basic and acidic residues) spans 1291-1302 (LSKEKEGSRGEE). The tract at residues 1291 to 1320 (LSKEKEGSRGEEEAGQEEGGSRREPQVNQQ) is disordered. A UBA domain is found at 1316-1355 (QVNQQQLQQLMDMGFTREHAMEALLNTSTMEQATEYLLTH). Phosphoserine occurs at positions 1368, 1370, 1382, and 1395. One can recognise a UIM domain in the interval 1370 to 1389 (SEEDQMMRAIAMSLGQDIPM). A disordered region spans residues 1396–1415 (PEEVACRKEEEERKAREKQE). Residues 1603–1680 (RAQMTKYLQS…ETGNRRPVML (78 aa)) enclose the WWE domain. The tract at residues 1690–1733 (KNSKSSNGQELEKTLEESKETDIKHKENKGNDIPLALESTNTEK) is disordered. The span at 1699–1719 (ELEKTLEESKETDIKHKENKG) shows a compositional bias: basic and acidic residues. Residue Ser1907 is modified to Phosphoserine. Disordered regions lie at residues 2019-2065 (APAE…SKPL), 2262-2343 (SLFG…QEMQ), and 2355-2479 (LLER…ASPL). The segment covering 2022–2033 (ETSTTGTSQGEA) has biased composition (polar residues). A Phosphothreonine modification is found at Thr2035. Positions 2037–2057 (EETREGKKDKEGDRTSEEGKQ) are enriched in basic and acidic residues. Composition is skewed to low complexity over residues 2262-2271 (SLFGSKSASS) and 2278-2291 (DAQGASQDSSSHQQ). Ser2266 carries the post-translational modification Phosphoserine. Lys2267 carries the N6-acetyllysine modification. Acidic residues-rich tracts occupy residues 2295–2306 (EPGEAEVQEEDH) and 2314–2325 (ADGDIMDGEAET). A phosphoserine mark is found at Ser2362, Ser2365, and Ser2391. Residues 2388–2398 (SNLSQASTLQA) are compositionally biased toward polar residues. Residues 2408–2472 (DPEDEEEHTQ…SEMELDEDYP (65 aa)) are compositionally biased toward acidic residues. Residues Ser2527, Ser2532, and Ser2535 each carry the phosphoserine modification. Thr2554 is modified (phosphothreonine). Phosphoserine is present on residues Ser2584, Ser2595, and Ser2619. Residues 2704–2716 (IIDKGKEDKENRD) are compositionally biased toward basic and acidic residues. 3 disordered regions span residues 2704–2970 (IIDK…GVDP), 2991–3012 (IRPPTRSAPSSNSSAPAVVGNP), and 3036–3059 (QQRAEQQRRELAQNASSDTPMDPV). Residues 2717–2736 (QSAQCTVTKTNDSTEQNVSD) are compositionally biased toward polar residues. A compositionally biased stretch (low complexity) spans 2738–2756 (TPMPDSYPTTPSSTDAPTS). The residue at position 2751 (Thr2751) is a Phosphothreonine. Polar residues-rich tracts occupy residues 2818-2835 (AETTQMELSPAPTITSLS), 2847-2864 (AVSSQLEGSPMDTSSLAS), and 2877-2890 (AGSSEQPTAGSSTP). A phosphoserine mark is found at Ser2826, Ser2833, Ser2835, Ser2861, Ser2887, and Ser2888. Thr2889 is modified (phosphothreonine). Composition is skewed to low complexity over residues 2913–2932 (PPEDSSPPASSESSSTRDSA) and 2993–3007 (PPTRSAPSSNSSAPA). Ser2918 carries the post-translational modification Phosphoserine. Residues Ser3116, Ser3117, Ser3122, Ser3127, and Ser3135 each carry the phosphoserine modification. Position 3149 is an omega-N-methylarginine (Arg3149). 5 disordered regions span residues 3243-3266 (PKLSTSEERGKKSSKSCASSSHEN), 3352-3383 (TQQRTKETNCESDRERGSKQACSPCSSQSSSS), 3405-3429 (GKNSVKSVPVSSGGEGETSPHSLEA), 3471-3514 (SEVQ…TTPV), and 3539-3566 (TPTTATTTVSTSTTKGSKSPAKVGEGGS). The segment covering 3355-3369 (RTKETNCESDRERGS) has biased composition (basic and acidic residues). Low complexity predominate over residues 3370 to 3383 (KQACSPCSSQSSSS). Composition is skewed to low complexity over residues 3475–3503 (TNSSNSGSSTAATSNTSTTTTTTTTATAP) and 3539–3552 (TPTTATTTVSTSTT). Ser3557, Ser3663, Ser3753, Ser3758, Ser3760, and Ser3761 each carry phosphoserine. The tract at residues 3738-3759 (TRRANKKAKQTGRLGSSGLGSA) is disordered. Residues 3749–3759 (GRLGSSGLGSA) are compositionally biased toward low complexity. Disordered regions lie at residues 3782–3850 (EGQR…LPLL) and 3897–3951 (RESK…SSSL). Positions 3794–3803 (TSESSNQSET) are enriched in polar residues. 3 positions are modified to phosphoserine: Ser3810, Ser3818, and Ser3830. The span at 3817–3828 (PSPSAQDTQSIV) shows a compositional bias: polar residues. Thr3833 carries the post-translational modification Phosphothreonine. Composition is skewed to basic and acidic residues over residues 3836–3845 (GEKEKEEKPP) and 3897–3918 (RESKPPVRDTRESQLAHIKDEP). Residues Ser3909 and Ser3922 each carry the phosphoserine modification. Over residues 3919-3928 (PPLSPAPLTP) the composition is skewed to pro residues. A phosphothreonine mark is found at Thr3927 and Thr3930. Residues 3941–3951 (EPSSMHISSSL) are compositionally biased toward polar residues. Residues 4041 to 4377 (SPEEMKNRLY…QECSEGFGLA (337 aa)) enclose the HECT domain. Tyr4274 bears the Phosphotyrosine mark. The active-site Glycyl thioester intermediate is the Cys4344.

This sequence belongs to the UPL family. TOM1/PTR1 subfamily. Interacts with isoform p19ARF of CDKN2A which strongly inhibits HUWE1 ubiquitin ligase activity. Interacts with MYCN, POLB and CDC6. Interacts with PA2G4. Interacts with NR1D1. Interacts with AMBRA1. Interacts with HAPSTR1. Interacts with HAPSTR2. In hepatocytes, interacts with PAQR3; the interaction promotes PPARA poylubiquitination and STUB1-mediated degradation. Post-translationally, phosphorylated on tyrosine; phosphorylation is probably required for its ability to inhibit TP53 transactivation. As to expression, widely expressed.

The protein resides in the cytoplasm. The protein localises to the nucleus. It is found in the mitochondrion. The catalysed reaction is S-ubiquitinyl-[E2 ubiquitin-conjugating enzyme]-L-cysteine + [acceptor protein]-L-lysine = [E2 ubiquitin-conjugating enzyme]-L-cysteine + N(6)-ubiquitinyl-[acceptor protein]-L-lysine.. Its pathway is protein modification; protein ubiquitination. E3 ubiquitin-protein ligase which mediates ubiquitination and subsequent proteasomal degradation of target proteins. Regulates apoptosis by catalyzing the polyubiquitination and degradation of MCL1. Mediates monoubiquitination of DNA polymerase beta (POLB) at 'Lys-41', 'Lys-61' and 'Lys-81', thereby playing a role in base-excision repair. Also ubiquitinates the p53/TP53 tumor suppressor and core histones including H1, H2A, H2B, H3 and H4. Ubiquitinates MFN2 to negatively regulate mitochondrial fusion in response to decreased stearoylation of TFRC. Ubiquitination of MFN2 also takes place following induction of mitophagy; AMBRA1 acts as a cofactor for HUWE1-mediated ubiquitination. Regulates neural differentiation and proliferation by catalyzing the polyubiquitination and degradation of MYCN. May regulate abundance of CDC6 after DNA damage by polyubiquitinating and targeting CDC6 to degradation. Mediates polyubiquitination of PA2G4. Acts in concert with MYCBP2 to regulate the circadian clock gene expression by promoting the lithium-induced ubiquination and degradation of NR1D1. Binds to an upstream initiator-like sequence in the preprodynorphin gene. Mediates HAPSTR1 degradation, but is also a required cofactor in the pathway by which HAPSTR1 governs stress signaling. Acts as a regulator of the JNK and NF-kappa-B signaling pathways by mediating assembly of heterotypic 'Lys-63'-/'Lys-48'-linked branched ubiquitin chains that are then recognized by TAB2: HUWE1 mediates branching of 'Lys-48'-linked chains of substrates initially modified with 'Lys-63'-linked conjugates by TRAF6. 'Lys-63'-/'Lys-48'-linked branched ubiquitin chains protect 'Lys-63'-linkages from CYLD deubiquitination. Ubiquitinates PPARA in hepatocytes. This Mus musculus (Mouse) protein is E3 ubiquitin-protein ligase HUWE1 (Huwe1).